The chain runs to 87 residues: Translation initiation factor IF-1 2 (87 aa).

The S1-like domain occupies 1–72; sequence MAKEELLELD…TKGRINFRHK (72 aa).

It belongs to the IF-1 family. Component of the 30S ribosomal translation pre-initiation complex which assembles on the 30S ribosome in the order IF-2 and IF-3, IF-1 and N-formylmethionyl-tRNA(fMet); mRNA recruitment can occur at any time during PIC assembly.

The protein localises to the cytoplasm. Functionally, one of the essential components for the initiation of protein synthesis. Stabilizes the binding of IF-2 and IF-3 on the 30S subunit to which N-formylmethionyl-tRNA(fMet) subsequently binds. Helps modulate mRNA selection, yielding the 30S pre-initiation complex (PIC). Upon addition of the 50S ribosomal subunit IF-1, IF-2 and IF-3 are released leaving the mature 70S translation initiation complex. The polypeptide is Translation initiation factor IF-1 2 (Burkholderia ambifaria (strain ATCC BAA-244 / DSM 16087 / CCUG 44356 / LMG 19182 / AMMD) (Burkholderia cepacia (strain AMMD))).